Reading from the N-terminus, the 526-residue chain is Nucleolar complex protein 4 homolog A (526 aa).

3 helical membrane-spanning segments follow: residues 307 to 327 (AAYD…FILI), 358 to 378 (FFHL…LVAA), and 386 to 406 (LALT…CNLI).

It belongs to the CBF/MAK21 family.

The protein localises to the nucleus membrane. The protein resides in the nucleus. It localises to the nucleolus. This Xenopus laevis (African clawed frog) protein is Nucleolar complex protein 4 homolog A (noc4l-a).